Here is a 191-residue protein sequence, read N- to C-terminus: Peptide methionine sulfoxide reductase MsrA (191 aa).

Residue Cys-21 is part of the active site.

Belongs to the MsrA Met sulfoxide reductase family.

It catalyses the reaction L-methionyl-[protein] + [thioredoxin]-disulfide + H2O = L-methionyl-(S)-S-oxide-[protein] + [thioredoxin]-dithiol. The catalysed reaction is [thioredoxin]-disulfide + L-methionine + H2O = L-methionine (S)-S-oxide + [thioredoxin]-dithiol. Has an important function as a repair enzyme for proteins that have been inactivated by oxidation. Catalyzes the reversible oxidation-reduction of methionine sulfoxide in proteins to methionine. This chain is Peptide methionine sulfoxide reductase MsrA, found in Ralstonia nicotianae (strain ATCC BAA-1114 / GMI1000) (Ralstonia solanacearum).